A 467-amino-acid chain; its full sequence is tRNA-2-methylthio-N(6)-dimethylallyladenosine synthase (467 aa).

The interval 1 to 20 (MSDDTTQIEPAMAQETSPRA) is disordered. An MTTase N-terminal domain is found at 23–143 (RKVFVKTYGC…LPNALARVRG (121 aa)). Residues cysteine 32, cysteine 68, cysteine 106, cysteine 184, cysteine 188, and cysteine 191 each coordinate [4Fe-4S] cluster. A Radical SAM core domain is found at 170–402 (RKRGVSAFLT…QALLSAQQYA (233 aa)). The TRAM domain maps to 405–467 (DSMIGRKMDV…TNSLIAQKLA (63 aa)).

Belongs to the methylthiotransferase family. MiaB subfamily. As to quaternary structure, monomer. Requires [4Fe-4S] cluster as cofactor.

The protein resides in the cytoplasm. It carries out the reaction N(6)-dimethylallyladenosine(37) in tRNA + (sulfur carrier)-SH + AH2 + 2 S-adenosyl-L-methionine = 2-methylsulfanyl-N(6)-dimethylallyladenosine(37) in tRNA + (sulfur carrier)-H + 5'-deoxyadenosine + L-methionine + A + S-adenosyl-L-homocysteine + 2 H(+). Its function is as follows. Catalyzes the methylthiolation of N6-(dimethylallyl)adenosine (i(6)A), leading to the formation of 2-methylthio-N6-(dimethylallyl)adenosine (ms(2)i(6)A) at position 37 in tRNAs that read codons beginning with uridine. In Brucella suis (strain ATCC 23445 / NCTC 10510), this protein is tRNA-2-methylthio-N(6)-dimethylallyladenosine synthase.